Reading from the N-terminus, the 109-residue chain is Aquaporin-2 (109 aa).

Residues 1–6 are Cytoplasmic-facing; the sequence is SIAFSR. Residues 7–27 traverse the membrane as a helical segment; the sequence is AVFTEFLATLLFVFFGLGSAL. The Extracellular segment spans residues 28 to 35; it reads NWPQALPS. Residues 36-54 traverse the membrane as a helical segment; it reads VLQIAMAFGLAIGTLVQML. Residues 55 to 59 lie on the Cytoplasmic side of the membrane; sequence GHISG. An intramembrane region (discontinuously helical) is located at residues 60 to 69; it reads AHINPAVTVA. Residues 63–65 carry the NPA 1 motif; it reads NPA. Residues 70–80 lie on the Cytoplasmic side of the membrane; it reads CLVGCHISFLR. Residues 81 to 102 traverse the membrane as a helical segment; that stretch reads AAFYVAAQLLGAVAGAALLHEV. Residues 103-109 are Extracellular-facing; sequence TPPSIRG.

It belongs to the MIP/aquaporin (TC 1.A.8) family. In terms of assembly, homotetramer. Serine phosphorylation is necessary and sufficient for expression at the apical membrane. Endocytosis is not phosphorylation-dependent. Post-translationally, N-glycosylated.

The protein localises to the apical cell membrane. Its subcellular location is the basolateral cell membrane. The protein resides in the cell membrane. It is found in the cytoplasmic vesicle membrane. It localises to the golgi apparatus. The protein localises to the trans-Golgi network membrane. It carries out the reaction H2O(in) = H2O(out). The catalysed reaction is glycerol(in) = glycerol(out). In terms of biological role, forms a water-specific channel that provides the plasma membranes of renal collecting duct with high permeability to water, thereby permitting water to move in the direction of an osmotic gradient. Plays an essential role in renal water homeostasis. Could also be permeable to glycerol. The chain is Aquaporin-2 from Erinaceus europaeus (Western European hedgehog).